We begin with the raw amino-acid sequence, 218 residues long: Small ribosomal subunit protein uS7 (218 aa).

This sequence belongs to the universal ribosomal protein uS7 family. In terms of assembly, part of the 30S ribosomal subunit.

Functionally, one of the primary rRNA binding proteins, it binds directly to 16S rRNA where it nucleates assembly of the head domain of the 30S subunit. Is located at the subunit interface close to the decoding center. This is Small ribosomal subunit protein uS7 (rps7) from Pyrococcus horikoshii (strain ATCC 700860 / DSM 12428 / JCM 9974 / NBRC 100139 / OT-3).